The chain runs to 265 residues: tRNA pseudouridine synthase A (265 aa).

Residue D52 is the Nucleophile of the active site. Y105 provides a ligand contact to substrate.

The protein belongs to the tRNA pseudouridine synthase TruA family.

It carries out the reaction uridine(38/39/40) in tRNA = pseudouridine(38/39/40) in tRNA. Its function is as follows. Formation of pseudouridine at positions 38, 39 and 40 in the anticodon stem and loop of transfer RNAs. This chain is tRNA pseudouridine synthase A, found in Archaeoglobus fulgidus (strain ATCC 49558 / DSM 4304 / JCM 9628 / NBRC 100126 / VC-16).